A 189-amino-acid polypeptide reads, in one-letter code: GTP cyclohydrolase 1 (189 aa).

Zn(2+)-binding residues include Cys-79, His-82, and Cys-150.

It belongs to the GTP cyclohydrolase I family. As to quaternary structure, homomer.

It carries out the reaction GTP + H2O = 7,8-dihydroneopterin 3'-triphosphate + formate + H(+). The protein operates within cofactor biosynthesis; 7,8-dihydroneopterin triphosphate biosynthesis; 7,8-dihydroneopterin triphosphate from GTP: step 1/1. This chain is GTP cyclohydrolase 1, found in Rickettsia africae (strain ESF-5).